Reading from the N-terminus, the 301-residue chain is 4-hydroxybenzoate octaprenyltransferase (301 aa).

7 consecutive transmembrane segments (helical) span residues 34–54 (IGSL…AGGL), 57–77 (LWTL…GCVI), 108–128 (LWVF…LNWL), 163–183 (WGIP…AWLL), 222–242 (DLIA…LVGL), 248–268 (IAYW…FHIA), and 280–300 (FLHN…SLAL).

The protein belongs to the UbiA prenyltransferase family. The cofactor is Mg(2+).

It is found in the cell inner membrane. It carries out the reaction all-trans-octaprenyl diphosphate + 4-hydroxybenzoate = 4-hydroxy-3-(all-trans-octaprenyl)benzoate + diphosphate. Its pathway is cofactor biosynthesis; ubiquinone biosynthesis. In terms of biological role, catalyzes the prenylation of para-hydroxybenzoate (PHB) with an all-trans polyprenyl group. Mediates the second step in the final reaction sequence of ubiquinone-8 (UQ-8) biosynthesis, which is the condensation of the polyisoprenoid side chain with PHB, generating the first membrane-bound Q intermediate 3-octaprenyl-4-hydroxybenzoate. In Xanthomonas campestris pv. campestris (strain 8004), this protein is 4-hydroxybenzoate octaprenyltransferase.